The chain runs to 70 residues: Large ribosomal subunit protein eL38 (70 aa).

Residue Lys4 forms a Glycyl lysine isopeptide (Lys-Gly) (interchain with G-Cter in SUMO2) linkage. Lys9 is subject to N6-acetyllysine; alternate. Lys9 participates in a covalent cross-link: Glycyl lysine isopeptide (Lys-Gly) (interchain with G-Cter in SUMO2); alternate. At Lys67 the chain carries N6-acetyllysine.

It belongs to the eukaryotic ribosomal protein eL38 family. As to quaternary structure, component of the large ribosomal subunit.

It is found in the cytoplasm. In terms of biological role, component of the large ribosomal subunit. The ribosome is a large ribonucleoprotein complex responsible for the synthesis of proteins in the cell. This Macaca fascicularis (Crab-eating macaque) protein is Large ribosomal subunit protein eL38 (RPL38).